A 477-amino-acid polypeptide reads, in one-letter code: Tripartite motif-containing protein 72 (477 aa).

Zn(2+) is bound by residues Leu14, Gln17, Pro29, Cys31, Thr34, Gln37, Thr53, Pro56, Gly86, Leu89, Val97, Glu100, Leu105, Gly108, Gly114, and Lys117. An RING-type zinc finger spans residues 16–59 (CQLCLELFRAPVTPECGHTFCQGCLTGVPKNQDQNGSTPCPTCQ). The B box-type zinc-finger motif lies at 83–124 (VPQGHCLEHMDPLSVYCEQDKELICGVCASLGKHKGHNIITA). Positions 135-232 (LPQQQVILQE…QMEGVLKDVE (98 aa)) form a coiled coil. The B30.2/SPRY domain maps to 272–476 (DEFKFQVWRK…LKIFYPPAEQ (205 aa)).

It belongs to the TRIM/RBCC family. As to quaternary structure, homodimer. Homooligomer; disulfide-linked. Oligomerizes on the phospholipid membrane. Disulfide bond formation at Cys-244 occurs in case of membrane damage that cause the entry of the oxidized milieu of the extracellular space, resulting in homooligomerization.

The protein localises to the cell membrane. It is found in the sarcolemma. The protein resides in the cytoplasmic vesicle membrane. The enzyme catalyses S-ubiquitinyl-[E2 ubiquitin-conjugating enzyme]-L-cysteine + [acceptor protein]-L-lysine = [E2 ubiquitin-conjugating enzyme]-L-cysteine + N(6)-ubiquitinyl-[acceptor protein]-L-lysine.. It participates in protein modification; protein ubiquitination. Specifically binds phosphatidylserine. The binding to phospholipids enhances ubiquitination activity. Muscle-specific E3 ubiquitin-protein ligase that plays a central role in cell membrane repair by nucleating the assembly of the repair machinery at injury sites. Acts as a sensor of oxidation: upon membrane damage, entry of extracellular oxidative environment results in disulfide bond formation and homooligomerization at the injury site. This oligomerization acts as a nucleation site for recruitment of TRIM72-containing vesicles to the injury site, leading to membrane patch formation. Probably acts upstream of the Ca(2+)-dependent membrane resealing process. Required for transport of DYSF to sites of cell injury during repair patch formation. Regulates membrane budding and exocytosis. May be involved in the regulation of the mobility of KCNB1-containing endocytic vesicles. This Xenopus laevis (African clawed frog) protein is Tripartite motif-containing protein 72 (trim72).